A 348-amino-acid chain; its full sequence is Papaya proteinase 4 (348 aa).

An N-terminal signal peptide occupies residues 1–18; the sequence is MAIICSFSKLLFVAICLF. Residues 19 to 132 constitute a propeptide, activation peptide; sequence GHMSLSYCDF…EEFVNEDIVD (114 aa). Intrachain disulfides connect Cys154–Cys195, Cys188–Cys227, and Cys285–Cys336. Residue Cys157 is part of the active site. Residues His291 and Asn311 contribute to the active site.

This sequence belongs to the peptidase C1 family.

It carries out the reaction Preferential cleavage: Gly-|-Xaa, in proteins and in small molecule substrates.. With respect to regulation, not inhibited by cystatin. Thiol protease with a substrate specificity very different from the other thiol proteases. In Carica papaya (Papaya), this protein is Papaya proteinase 4.